We begin with the raw amino-acid sequence, 396 residues long: F-box protein At2g21930 (396 aa).

The region spanning 19–65 is the F-box domain; sequence SGNSVQIPFDLIPEILKRLPVKTLARFLSVSKEYTSIIRNRDFMKSY.

This is F-box protein At2g21930 from Arabidopsis thaliana (Mouse-ear cress).